The primary structure comprises 307 residues: Probable 2-methylisocitrate lyase 2 (307 aa).

Residue 53–55 (SGA) coordinates substrate. Mg(2+)-binding residues include Asp92 and Asp94. Residues 129 to 130 (CG), Arg164, Glu194, 216 to 218 (NMT), Arg247, and Arg276 each bind substrate.

This sequence belongs to the isocitrate lyase/PEP mutase superfamily. Methylisocitrate lyase family. Homotetramer; dimer of dimers. Mg(2+) serves as cofactor.

It carries out the reaction (2S,3R)-3-hydroxybutane-1,2,3-tricarboxylate = pyruvate + succinate. It participates in organic acid metabolism; propanoate degradation. Functionally, involved in the catabolism of short chain fatty acids (SCFA) via the 2-methylcitrate cycle I (propionate degradation route). Catalyzes the thermodynamically favored C-C bond cleavage of (2R,3S)-2-methylisocitrate to yield pyruvate and succinate via an alpha-carboxy-carbanion intermediate. The polypeptide is Probable 2-methylisocitrate lyase 2 (Corynebacterium glutamicum (strain ATCC 13032 / DSM 20300 / JCM 1318 / BCRC 11384 / CCUG 27702 / LMG 3730 / NBRC 12168 / NCIMB 10025 / NRRL B-2784 / 534)).